A 423-amino-acid polypeptide reads, in one-letter code: Protein CLP1 homolog (423 aa).

Residues glutamate 16, lysine 57, and aspartate 119–threonine 124 contribute to the ATP site.

It belongs to the Clp1 family. Clp1 subfamily.

It is found in the nucleus. Functionally, required for endonucleolytic cleavage during polyadenylation-dependent pre-mRNA 3'-end formation. The chain is Protein CLP1 homolog (cbc) from Drosophila melanogaster (Fruit fly).